We begin with the raw amino-acid sequence, 503 residues long: Maturase K (503 aa).

It belongs to the intron maturase 2 family. MatK subfamily.

The protein resides in the plastid. It localises to the chloroplast. In terms of biological role, usually encoded in the trnK tRNA gene intron. Probably assists in splicing its own and other chloroplast group II introns. The chain is Maturase K from Backhousia subargentea (Giant ironwood).